The primary structure comprises 251 residues: Hydroxyacylglutathione hydrolase (251 aa).

Zn(2+) is bound by residues His53, His55, Asp57, His58, His110, Asp127, and His165.

It belongs to the metallo-beta-lactamase superfamily. Glyoxalase II family. Monomer. Requires Zn(2+) as cofactor.

It catalyses the reaction an S-(2-hydroxyacyl)glutathione + H2O = a 2-hydroxy carboxylate + glutathione + H(+). It participates in secondary metabolite metabolism; methylglyoxal degradation; (R)-lactate from methylglyoxal: step 2/2. Functionally, thiolesterase that catalyzes the hydrolysis of S-D-lactoyl-glutathione to form glutathione and D-lactic acid. This Escherichia coli (strain ATCC 8739 / DSM 1576 / NBRC 3972 / NCIMB 8545 / WDCM 00012 / Crooks) protein is Hydroxyacylglutathione hydrolase.